Consider the following 64-residue polypeptide: Alpha-conotoxin CnIA (64 aa).

A signal peptide spans 1 to 21; that stretch reads MGMRMMFTVFLLVVLTTTVVS. The propeptide occupies 22–47; that stretch reads FPSDSASDGRDDEAKDERSDIYESKR. Disulfide bonds link C51/C56 and C52/C62. A 4-hydroxyproline; in CnIK; partial modification is found at P54. C62 is modified (cysteine amide).

Belongs to the conotoxin A superfamily. Expressed by the venom duct.

The protein resides in the secreted. Functionally, alpha-conotoxins act on postsynaptic membranes, they bind to the nicotinic acetylcholine receptors (nAChR) and thus inhibit them. CnIA and CnIB block muscular nAChR alpha-1/gamma and alpha-1/delta subunits. In Conus consors (Singed cone), this protein is Alpha-conotoxin CnIA.